Here is a 257-residue protein sequence, read N- to C-terminus: MSLEIVPFVVAIPARFSASRLPGKPLRLLGGRPLIHRVAERALSTGAREVWVATDDVRIAEAVASLDGVHVAMTANTHLSGSDRLAECARIAGWDPEVCVVNLQGDEPFAPAAGIRAVAALLHHSNADMATLATTIDKSEDLFNPNIVKLVCNTHGEALYFSRAPIPWNRDTFATTREPTPLGPWLRHIGLYACNAGFLQRFTTMQPGTLEQIESLEQLRVLEAGHRIAVRITPEHFPPGIDTPEDLAKAEKALEDV.

This sequence belongs to the KdsB family.

The protein localises to the cytoplasm. The enzyme catalyses 3-deoxy-alpha-D-manno-oct-2-ulosonate + CTP = CMP-3-deoxy-beta-D-manno-octulosonate + diphosphate. It functions in the pathway nucleotide-sugar biosynthesis; CMP-3-deoxy-D-manno-octulosonate biosynthesis; CMP-3-deoxy-D-manno-octulosonate from 3-deoxy-D-manno-octulosonate and CTP: step 1/1. It participates in bacterial outer membrane biogenesis; lipopolysaccharide biosynthesis. Activates KDO (a required 8-carbon sugar) for incorporation into bacterial lipopolysaccharide in Gram-negative bacteria. This chain is 3-deoxy-manno-octulosonate cytidylyltransferase, found in Xylella fastidiosa (strain M23).